The chain runs to 510 residues: Acyl-CoA desaturase 1 (510 aa).

At 1–112 the chain is on the cytoplasmic side; that stretch reads MPTSGTTIEL…TLNNWHQHLN (112 aa). A helical membrane pass occupies residues 113–133; the sequence is WLNMVLVCGMPMIGWYFALSG. Residues 134–138 are Lumenal-facing; sequence KVPLH. A helical transmembrane segment spans residues 139–159; the sequence is LNVFLFSVFYYAVGGVSITAG. The Cytoplasmic segment spans residues 160-255; it reads YHRLWSHRSY…DWTIRFQHRH (96 aa). Fe cation-binding residues include histidine 161, histidine 166, histidine 198, histidine 201, and histidine 202. The Histidine box-1 motif lies at 161 to 166; it reads HRLWSH. Residues 198–202 carry the Histidine box-2 motif; that stretch reads HRIHH. The helical transmembrane segment at 256-276 threads the bilayer; sequence YILLMLLTAFVIPTLICGYFF. The Lumenal segment spans residues 277 to 280; that stretch reads NDYM. A helical transmembrane segment spans residues 281–301; sequence GGLIYAGFIRVFVIQQATFCI. The Cytoplasmic segment spans residues 302–510; that stretch reads NSLAHYIGTQ…GEIYETGKFF (209 aa). 4 residues coordinate Fe cation: histidine 306, histidine 335, histidine 338, and histidine 339. The short motif at 335–339 is the Histidine box-3 element; that stretch reads HNFHH. The Cytochrome b5 heme-binding domain occupies 409–487; the sequence is LPMWDKQTFL…LADMRVAVIK (79 aa). Heme contacts are provided by histidine 444 and histidine 470.

Belongs to the fatty acid desaturase type 1 family. The cofactor is Fe(2+).

It localises to the endoplasmic reticulum membrane. It carries out the reaction octadecanoyl-CoA + 2 Fe(II)-[cytochrome b5] + O2 + 2 H(+) = (9Z)-octadecenoyl-CoA + 2 Fe(III)-[cytochrome b5] + 2 H2O. It catalyses the reaction hexadecanoyl-CoA + 2 Fe(II)-[cytochrome b5] + O2 + 2 H(+) = (9Z)-hexadecenoyl-CoA + 2 Fe(III)-[cytochrome b5] + 2 H2O. Its function is as follows. Stearoyl-CoA desaturase that utilizes O(2) and electrons from reduced cytochrome b5 to introduce the first double bond into saturated fatty acyl-CoA substrates. Catalyzes the insertion of a cis double bond at the delta-9 position into fatty acyl-CoA substrates including palmitoyl-CoA and stearoyl-CoA. Required for the biosynthesis of membrane phospholipids, cholesterol esters and triglycerides. Regulates fatty acid desaturation, that is, the ratio of unsaturated versus saturated fatty acyl chains, by competing with the acyltransferase STC1 for the common substrate C16:0-CoA. SCT1 sequesters C16:0-CoA into lipids, thereby shielding it from desaturation by OLE1. The sequence is that of Acyl-CoA desaturase 1 (OLE1) from Saccharomyces cerevisiae (strain ATCC 204508 / S288c) (Baker's yeast).